We begin with the raw amino-acid sequence, 309 residues long: Probable nitrogen assimilation transcriptional activator (309 aa).

Positions 1–57 (MRLEQLQAFLKVAELGSFQQAALQSEVTQSTISRQIQGLESALKCQLFHRGAQAKLT) constitute an HTH lysR-type domain. The H-T-H motif DNA-binding region spans 18 to 38 (FQQAALQSEVTQSTISRQIQG).

The protein belongs to the LysR transcriptional regulatory family.

Functionally, seems to regulate utilization of fixed nitrogen by controlling the expression of a certain gene(s) involved in nitrogen metabolism. The sequence is that of Probable nitrogen assimilation transcriptional activator (ntcB) from Synechocystis sp. (strain ATCC 27184 / PCC 6803 / Kazusa).